A 352-amino-acid polypeptide reads, in one-letter code: PDZ and LIM domain protein 2 (352 aa).

The region spanning 1-84 (MALTVDVAGP…PLRLQLDRSQ (84 aa)) is the PDZ domain. 2 disordered regions span residues 69 to 95 (IRQS…NGDS) and 108 to 141 (VRTH…PPPF). Polar residues predominate over residues 81–95 (DRSQAASPGQTNGDS). Positions 117–135 (SLRSSYSSPTSLSPRAGSP) are enriched in low complexity. S124 is subject to Phosphoserine. T126 is subject to Phosphothreonine. 10 positions are modified to phosphoserine: S127, S129, S134, S137, S143, S161, S197, S203, S213, and S266. Disordered stretches follow at residues 170-214 (LSYS…GGSL) and 253-275 (ERGG…PASR). Residues 258 to 275 (PAFLPSSLSPQSSLPASR) are compositionally biased toward low complexity. The LIM zinc-binding domain maps to 284–344 (HTCEKCSTSI…EKHARQRYSA (61 aa)).

As to quaternary structure, interacts with alpha-actinins ACTN1 and ACTN4, FLNA and MYH9. Interacts (via LIM zinc-binding domain) with MKRN2.

The protein localises to the cytoplasm. It localises to the cytoskeleton. Its function is as follows. Probable adapter protein located at the actin cytoskeleton that promotes cell attachment. Necessary for the migratory capacity of epithelial cells. Overexpression enhances cell adhesion to collagen and fibronectin and suppresses anchorage independent growth. May contribute to tumor cell migratory capacity. This chain is PDZ and LIM domain protein 2 (PDLIM2), found in Macaca fascicularis (Crab-eating macaque).